A 1173-amino-acid polypeptide reads, in one-letter code: DNA-directed RNA polymerase subunit beta (1173 aa).

The interval 1–23 is disordered; the sequence is MEGSLLVASSTSNNETANTASTD. The span at 8-22 shows a compositional bias: low complexity; the sequence is ASSTSNNETANTAST.

It belongs to the RNA polymerase beta chain family. In terms of assembly, the RNAP catalytic core consists of 2 alpha, 1 beta, 1 beta' and 1 omega subunit. When a sigma factor is associated with the core the holoenzyme is formed, which can initiate transcription.

It carries out the reaction RNA(n) + a ribonucleoside 5'-triphosphate = RNA(n+1) + diphosphate. Its function is as follows. DNA-dependent RNA polymerase catalyzes the transcription of DNA into RNA using the four ribonucleoside triphosphates as substrates. This chain is DNA-directed RNA polymerase subunit beta, found in Paenarthrobacter aurescens (strain TC1).